The primary structure comprises 40 residues: Large ribosomal subunit protein bL36A (40 aa).

This sequence belongs to the bacterial ribosomal protein bL36 family.

The polypeptide is Large ribosomal subunit protein bL36A (Renibacterium salmoninarum (strain ATCC 33209 / DSM 20767 / JCM 11484 / NBRC 15589 / NCIMB 2235)).